The chain runs to 190 residues: Threonylcarbamoyl-AMP synthase (190 aa).

One can recognise a YrdC-like domain in the interval 7–190; it reads TGSIAAAVDL…ALTGELFRQG (184 aa).

The protein belongs to the SUA5 family. TsaC subfamily.

The protein resides in the cytoplasm. The enzyme catalyses L-threonine + hydrogencarbonate + ATP = L-threonylcarbamoyladenylate + diphosphate + H2O. Its function is as follows. Required for the formation of a threonylcarbamoyl group on adenosine at position 37 (t(6)A37) in tRNAs that read codons beginning with adenine. Catalyzes the conversion of L-threonine, HCO(3)(-)/CO(2) and ATP to give threonylcarbamoyl-AMP (TC-AMP) as the acyladenylate intermediate, with the release of diphosphate. The protein is Threonylcarbamoyl-AMP synthase of Salmonella arizonae (strain ATCC BAA-731 / CDC346-86 / RSK2980).